A 3086-amino-acid polypeptide reads, in one-letter code: Genome polyprotein (3086 aa).

In terms of domain architecture, Peptidase S30 spans 122–256 (RRSKILACDL…RAGIHTIKHY (135 aa)). Catalysis depends on for P1 proteinase activity residues His173, Asp182, and Ser215. In terms of domain architecture, Peptidase C6 spans 590–711 (YYVAPEGYCY…TGEMLDYNVG (122 aa)). Residues Cys598 and His670 each act as for helper component proteinase activity in the active site. The region spanning 1189 to 1341 (ISSDTANAEF…PMFPVRVSEA (153 aa)) is the Helicase ATP-binding domain. Residue 1202–1209 (GGVGTGKS) coordinates ATP. The DEAH box signature appears at 1291-1294 (DECH). Tyr1870 bears the O-(5'-phospho-RNA)-tyrosine mark. Residues 1970–1990 (HDGELRQSRPSRPIQKDQVPA) form a disordered region. Residues 2000–2217 (SKSIAKGLRD…VNYGTMDLTS (218 aa)) form the Peptidase C4 domain. Residues His2045, Asp2080, and Cys2149 each act as for nuclear inclusion protein A activity in the active site. The region spanning 2482–2606 (WDYFDADGSR…AVEPSLSDKI (125 aa)) is the RdRp catalytic domain. The span at 2762–2821 (TAASSAATQTSTTSPTVTSTSGASTSTSSGTTSAPLASTTPPVSATTTPSTGTTAPTTPT) shows a compositional bias: low complexity. The segment at 2762–2822 (TAASSAATQT…GTTAPTTPTV (61 aa)) is disordered. Thr3069 bears the Phosphothreonine mark.

It belongs to the potyviridae genome polyprotein family. In terms of processing, VPg is uridylylated by the polymerase and is covalently attached to the 5'-end of the genomic RNA. This uridylylated form acts as a nucleotide-peptide primer for the polymerase. Genome polyprotein of potyviruses undergoes post-translational proteolytic processing by the main proteinase NIa-pro resulting in the production of at least ten individual proteins. The P1 proteinase and the HC-pro cleave only their respective C-termini autocatalytically. 6K1 is essential for proper proteolytic separation of P3 from CI.

It is found in the host cytoplasmic vesicle membrane. The protein localises to the host cytoplasmic vesicle. It localises to the virion. The catalysed reaction is RNA(n) + a ribonucleoside 5'-triphosphate = RNA(n+1) + diphosphate. The enzyme catalyses Hydrolyzes glutaminyl bonds, and activity is further restricted by preferences for the amino acids in P6 - P1' that vary with the species of potyvirus, e.g. Glu-Xaa-Xaa-Tyr-Xaa-Gln-|-(Ser or Gly) for the enzyme from tobacco etch virus. The natural substrate is the viral polyprotein, but other proteins and oligopeptides containing the appropriate consensus sequence are also cleaved.. It carries out the reaction Hydrolyzes a Gly-|-Gly bond at its own C-terminus, commonly in the sequence -Tyr-Xaa-Val-Gly-|-Gly, in the processing of the potyviral polyprotein.. Functionally, required for aphid transmission and also has proteolytic activity. Only cleaves a Gly-Gly dipeptide at its own C-terminus. Interacts with virions and aphid stylets. Acts as a suppressor of RNA-mediated gene silencing, also known as post-transcriptional gene silencing (PTGS), a mechanism of plant viral defense that limits the accumulation of viral RNAs. May have RNA-binding activity. Has helicase activity. It may be involved in replication. In terms of biological role, indispensable for virus replication. Reduces the abundance of host transcripts related to jasmonic acid biosynthesis therefore altering the host defenses. In order to increase its own stability, decreases host protein degradation pathways. Its function is as follows. Indispensable for virus replication. Functionally, mediates the cap-independent, EIF4E-dependent translation of viral genomic RNAs. Binds to the cap-binding site of host EIF4E and thus interferes with the host EIF4E-dependent mRNA export and translation. VPg-RNA directly binds EIF4E and is a template for transcription. Also forms trimeric complexes with EIF4E-EIF4G, which are templates for translation. Has RNA-binding and proteolytic activities. In terms of biological role, an RNA-dependent RNA polymerase that plays an essential role in the virus replication. Its function is as follows. Involved in aphid transmission, cell-to-cell and systemis movement, encapsidation of the viral RNA and in the regulation of viral RNA amplification. This Dactylis glomerata (Orchard grass) protein is Genome polyprotein.